Reading from the N-terminus, the 118-residue chain is Large ribosomal subunit protein uL18 (118 aa).

Belongs to the universal ribosomal protein uL18 family. As to quaternary structure, part of the 50S ribosomal subunit; part of the 5S rRNA/L5/L18/L25 subcomplex. Contacts the 5S and 23S rRNAs.

Its function is as follows. This is one of the proteins that bind and probably mediate the attachment of the 5S RNA into the large ribosomal subunit, where it forms part of the central protuberance. The chain is Large ribosomal subunit protein uL18 from Zymomonas mobilis subsp. mobilis (strain ATCC 31821 / ZM4 / CP4).